The primary structure comprises 509 residues: Butyrophilin-like protein 1 (509 aa).

The signal sequence occupies residues 1 to 27 (MMKGSPSVPPAGCLLPLLLLLFTGVSG). Ig-like V-type domains follow at residues 28–139 (EVSW…QEVS) and 151–237 (PLVH…KAIL). The Extracellular portion of the chain corresponds to 28–250 (EVSWFSVKGP…PFFPKTCPWK (223 aa)). 2 cysteine pairs are disulfide-bonded: C53–C127 and C167–C221. A helical transmembrane segment spans residues 251 to 271 (VALVCSVLILLVLLGGISLGI). Residues 272 to 509 (WKEHQVKRRE…SMGLSATAQP (238 aa)) are Cytoplasmic-facing. A B30.2/SPRY domain is found at 316-509 (RKALYKEDWK…SMGLSATAQP (194 aa)). The segment at 349-372 (MPDQDKTDSRTEENRGEETVSSSQ) is disordered. Positions 351 to 366 (DQDKTDSRTEENRGEE) are enriched in basic and acidic residues.

It belongs to the immunoglobulin superfamily. BTN/MOG family.

The protein localises to the membrane. In Mus musculus (Mouse), this protein is Butyrophilin-like protein 1 (Btnl1).